The sequence spans 364 residues: MAFDDKMKPVNGQPDQKSCGKKPKGLHLLSSTWWCPAAVTLAILCLVLSVTLIVQQTQLLQVSDLLKQYQANLTQQDHILEGQMSAQKKAENASQESKRELKEQIDTLTWKLNEKSKEQEKLLQQNQNLQEALQRAVNASEESKWELKEQIDILNWKLNGISKEQKELLQQNQNLQEALQKAEKYSEESQRELKEQIDTLSWKLNEKSKEQEELLQQNQNLQEALQRAANSSGPCPQDWIWHKENCYLFHGPFNWEKSRENCLSLDAQLLQISTTDDLNFVLQATSHSTSPFWMGLHRKNPNHPWLWENGSPLSFQFFRTRGVSLQMYSSGTCAYIQGGVVFAENCILTAFSICQKKANLLLTQ.

The segment at 1 to 21 is disordered; the sequence is MAFDDKMKPVNGQPDQKSCGK. The Cytoplasmic segment spans residues 1–31; the sequence is MAFDDKMKPVNGQPDQKSCGKKPKGLHLLSS. A helical; Signal-anchor for type II membrane protein membrane pass occupies residues 32–54; it reads TWWCPAAVTLAILCLVLSVTLIV. S-palmitoyl cysteine attachment occurs at residues C35 and C45. Residues 55–242 form a neck region; it reads QQTQLLQVSD…GPCPQDWIWH (188 aa). Residues 55–364 are Extracellular-facing; that stretch reads QQTQLLQVSD…QKKANLLLTQ (310 aa). N72, N92, and N138 each carry an N-linked (GlcNAc...) asparagine glycan. Positions 83-233 form a coiled coil; the sequence is QMSAQKKAEN…ALQRAANSSG (151 aa). 3 tandem repeats follow at residues 96-141, 142-187, and 188-233. Cystine bridges form between C235–C246, C262–C354, and C333–C346. The region spanning 242–355 is the C-type lectin domain; that stretch reads HKENCYLFHG…CILTAFSICQ (114 aa).

In terms of assembly, homodimer; disulfide-linked. May form a hexamer composed of 3 homodimers. Interacts with HSP70. N-glycosylated. In terms of tissue distribution, predominantly expressed in lung and at lower level in kidney. Expressed in macrophages but not in vascular smooth muscle cells.

The protein localises to the cell membrane. Its subcellular location is the membrane raft. It is found in the secreted. Receptor that mediates the recognition, internalization and degradation of oxidatively modified low density lipoprotein (oxLDL) by vascular endothelial cells. OxLDL is a marker of atherosclerosis that induces vascular endothelial cell activation and dysfunction, resulting in pro-inflammatory responses, pro-oxidative conditions and apoptosis. Its association with oxLDL induces the activation of NF-kappa-B through an increased production of intracellular reactive oxygen and a variety of pro-atherogenic cellular responses including a reduction of nitric oxide (NO) release, monocyte adhesion and apoptosis. In addition to binding oxLDL, it acts as a receptor for the HSP70 protein involved in antigen cross-presentation to naive T-cells in dendritic cells, thereby participating in cell-mediated antigen cross-presentation. Also involved in inflammatory process, by acting as a leukocyte-adhesion molecule at the vascular interface in endotoxin-induced inflammation. Also acts as a receptor for advanced glycation end (AGE) products, activated platelets, monocytes, apoptotic cells and both Gram-negative and Gram-positive bacteria. This chain is Oxidized low-density lipoprotein receptor 1 (Olr1), found in Rattus norvegicus (Rat).